Reading from the N-terminus, the 259-residue chain is Keratinocyte-associated transmembrane protein 2 (259 aa).

The first 44 residues, 1–44, serve as a signal peptide directing secretion; sequence MAASALGRMCGAAREKLSPGPGARGLGALARSLVLALLLVPVLC. Over 45 to 190 the chain is Extracellular; the sequence is SDRSENPPNN…VKLPPPNRED (146 aa). A disordered region spans residues 47–155; the sequence is RSENPPNNAT…YDWTTNPRDE (109 aa). Residues 50-81 show a composition bias toward polar residues; it reads NPPNNATVSSPVVVTAPGNHTSPSVSQISTTL. N-linked (GlcNAc...) asparagine glycosylation is found at asparagine 54 and asparagine 68. Low complexity predominate over residues 82–104; it reads SPASAEKSGSSSAAPTPTAAPSA. Over residues 105–122 the composition is skewed to acidic residues; the sequence is PEEEADSNEDPSMEEEDL. Position 165 is a phosphoserine (serine 165). Residues 191-211 form a helical membrane-spanning segment; the sequence is SHFFFHLLIFAFCAAVVYVTY. Residues 212–259 lie on the Cytoplasmic side of the membrane; sequence HNKRKIFLLVQSRKWRDGLCSKTVEYHRLDQNVNEAMPSLKITNDYIF. Phosphoserine is present on residues serine 223 and serine 250.

It is found in the membrane. The chain is Keratinocyte-associated transmembrane protein 2 (Kct2) from Mus musculus (Mouse).